The following is a 254-amino-acid chain: Coproheme decarboxylase (254 aa).

Residues arginine 136, 150–154, histidine 177, glutamine 190, and serine 228 each bind Fe-coproporphyrin III; that span reads YPMDK. Residue tyrosine 150 is part of the active site.

It belongs to the ChdC family. Type 1 subfamily. Fe-coproporphyrin III serves as cofactor.

It catalyses the reaction Fe-coproporphyrin III + 2 H2O2 + 2 H(+) = heme b + 2 CO2 + 4 H2O. It carries out the reaction Fe-coproporphyrin III + H2O2 + H(+) = harderoheme III + CO2 + 2 H2O. The catalysed reaction is harderoheme III + H2O2 + H(+) = heme b + CO2 + 2 H2O. It participates in porphyrin-containing compound metabolism; protoheme biosynthesis. In terms of biological role, involved in coproporphyrin-dependent heme b biosynthesis. Catalyzes the decarboxylation of Fe-coproporphyrin III (coproheme) to heme b (protoheme IX), the last step of the pathway. The reaction occurs in a stepwise manner with a three-propionate intermediate. The chain is Coproheme decarboxylase from Bacillus licheniformis (strain ATCC 14580 / DSM 13 / JCM 2505 / CCUG 7422 / NBRC 12200 / NCIMB 9375 / NCTC 10341 / NRRL NRS-1264 / Gibson 46).